The primary structure comprises 546 residues: Chaperonin GroEL 1 (546 aa).

Residues 30-33 (TLGP), Lys-51, 87-91 (DGTTT), Gly-415, 479-481 (NAA), and Asp-495 each bind ATP.

Belongs to the chaperonin (HSP60) family. In terms of assembly, forms a cylinder of 14 subunits composed of two heptameric rings stacked back-to-back. Interacts with the co-chaperonin GroES.

Its subcellular location is the cytoplasm. The enzyme catalyses ATP + H2O + a folded polypeptide = ADP + phosphate + an unfolded polypeptide.. Functionally, together with its co-chaperonin GroES, plays an essential role in assisting protein folding. The GroEL-GroES system forms a nano-cage that allows encapsulation of the non-native substrate proteins and provides a physical environment optimized to promote and accelerate protein folding. The protein is Chaperonin GroEL 1 of Vibrio vulnificus (strain CMCP6).